Here is a 291-residue protein sequence, read N- to C-terminus: uncharacterized protein (291 aa).

2 helical membrane-spanning segments follow: residues 42-62 (IFFF…RALW) and 86-106 (TIFP…LALD).

This sequence belongs to the cytochrome c oxidase subunit 2 family.

The protein resides in the mitochondrion membrane. This is an uncharacterized protein from Arabidopsis thaliana (Mouse-ear cress).